A 478-amino-acid chain; its full sequence is Zinc metalloproteinase/disintegrin VMP-II (478 aa).

Positions 1 to 20 are cleaved as a signal peptide; it reads MIQVLLVTICLAVFPYQGSS. Positions 21–190 are excised as a propeptide; the sequence is IILESGNVND…KASQLNLTPE (170 aa). The Peptidase M12B domain maps to 197–393; it reads RYIELVIVAD…HNPQCMLNEP (197 aa). Residues Glu200 and Asp284 each contribute to the Ca(2+) site. 3 cysteine pairs are disulfide-bonded: Cys308/Cys388, Cys348/Cys372, and Cys350/Cys355. His333 lines the Zn(2+) pocket. The active site involves Glu334. Positions 337 and 343 each coordinate Zn(2+). Ca(2+)-binding residues include Cys388 and Asn391. A propeptide spanning residues 394-405 is cleaved from the precursor; the sequence is LGTDTVSRNELL. Residues 414–478 enclose the Disintegrin domain; that stretch reads GSPANPCCDA…ADCPRNRFHA (65 aa). 4 disulfide bridges follow: Cys420-Cys443, Cys434-Cys440, Cys439-Cys464, and Cys452-Cys471. The Cell attachment site motif lies at 456–458; sequence RGD.

The protein belongs to the venom metalloproteinase (M12B) family. P-II subfamily. P-IIe sub-subfamily. As to quaternary structure, heterodimer; disulfide-linked (disintegrin). The cofactor is Zn(2+). In terms of tissue distribution, expressed by the venom gland.

The protein localises to the secreted. Impairs hemostasis in the envenomed animal. In terms of biological role, this recombinant protein inhibits ADP-induced platelet aggregation in whole human blood and this effect is concentration-dependent with an IC(50) of 34 nM. This is Zinc metalloproteinase/disintegrin VMP-II from Crotalus viridis viridis (Prairie rattlesnake).